Here is a 75-residue protein sequence, read N- to C-terminus: uncharacterized protein (75 aa).

The Glutaredoxin domain maps to 1 to 75 (MIKIYSTPTC…KAEIDKLIEK (75 aa)). The cysteines at positions 10 and 13 are disulfide-linked.

It belongs to the glutaredoxin family.

This is an uncharacterized protein from Clostridium pasteurianum.